A 66-amino-acid chain; its full sequence is DNA-directed RNA polymerase subunit Rpo10 (66 aa).

Residues Cys-7, Cys-10, Cys-44, and Cys-45 each contribute to the Zn(2+) site.

It belongs to the archaeal Rpo10/eukaryotic RPB10 RNA polymerase subunit family. Part of the RNA polymerase complex. The cofactor is Zn(2+).

It is found in the cytoplasm. The enzyme catalyses RNA(n) + a ribonucleoside 5'-triphosphate = RNA(n+1) + diphosphate. In terms of biological role, DNA-dependent RNA polymerase (RNAP) catalyzes the transcription of DNA into RNA using the four ribonucleoside triphosphates as substrates. This Sulfurisphaera tokodaii (strain DSM 16993 / JCM 10545 / NBRC 100140 / 7) (Sulfolobus tokodaii) protein is DNA-directed RNA polymerase subunit Rpo10.